Reading from the N-terminus, the 377-residue chain is Mannan endo-1,4-beta-mannosidase A (377 aa).

Residues Met1 to Ala18 form the signal peptide. Trp84 provides a ligand contact to substrate. N-linked (GlcNAc...) asparagine glycosylation occurs at Asn105. Residue Asn197 participates in substrate binding. Residue Glu198 is the Proton donor of the active site. Asn255 is a glycosylation site (N-linked (GlcNAc...) asparagine). Tyr273 lines the substrate pocket. The Nucleophile role is filled by Glu306. A glycan (N-linked (GlcNAc...) asparagine) is linked at Asn326. Trp336 is a binding site for substrate. Asn357 carries N-linked (GlcNAc...) asparagine glycosylation.

Belongs to the glycosyl hydrolase 5 (cellulase A) family.

Its subcellular location is the secreted. It carries out the reaction Random hydrolysis of (1-&gt;4)-beta-D-mannosidic linkages in mannans, galactomannans and glucomannans.. Its function is as follows. Endo-1,4-mannanase, a crucial enzyme for depolymerization of seed galactomannans and wood galactoglucomannans. The sequence is that of Mannan endo-1,4-beta-mannosidase A (manA) from Aspergillus aculeatus.